The following is a 275-amino-acid chain: Ribosomal RNA small subunit methyltransferase A (275 aa).

S-adenosyl-L-methionine is bound by residues Asn-21, Leu-23, Gly-48, Glu-69, Asp-94, and Asn-115.

Belongs to the class I-like SAM-binding methyltransferase superfamily. rRNA adenine N(6)-methyltransferase family. RsmA subfamily.

The protein localises to the cytoplasm. It carries out the reaction adenosine(1518)/adenosine(1519) in 16S rRNA + 4 S-adenosyl-L-methionine = N(6)-dimethyladenosine(1518)/N(6)-dimethyladenosine(1519) in 16S rRNA + 4 S-adenosyl-L-homocysteine + 4 H(+). Specifically dimethylates two adjacent adenosines (A1518 and A1519) in the loop of a conserved hairpin near the 3'-end of 16S rRNA in the 30S particle. May play a critical role in biogenesis of 30S subunits. This chain is Ribosomal RNA small subunit methyltransferase A, found in Clostridium botulinum (strain Kyoto / Type A2).